The sequence spans 768 residues: Integrin beta-8 (768 aa).

The first 42 residues, 1–42 (MCGSALGLPPAAFVRLRSCRPGPAAFLRAAWVLSLVLGLGRS), serve as a signal peptide directing secretion. Residues 43–683 (ENSRCASSHA…ECFSSPSYLR (641 aa)) are Extracellular-facing. One can recognise a PSI domain in the interval 46–95 (RCASSHAVSCSECLALGPDCGWCVHEDFISGGPRSERCDIVSNLISKGCP). 25 disulfide bridges follow: C47–C65, C55–C469, C58–C83, C68–C94, C211–C218, C266–C307, C407–C419, C439–C467, C471–C491, C471–C494, C481–C494, C499–C528, C511–C526, C520–C531, C533–C546, C553–C567, C561–C572, C574–C583, C585–C609, C593–C607, C601–C612, C614–C624, C627–C630, C634–C661, and C640–C657. The VWFA domain maps to 146–384 (PVDLYYLVDV…NLVVEAYQKL (239 aa)). Positions 154 and 156 each coordinate Mg(2+). Ca(2+) is bound at residue D193. N233 is a glycosylation site (N-linked (GlcNAc...) asparagine). Positions 249, 251, 253, and 254 each coordinate Ca(2+). A Mg(2+)-binding site is contributed by E254. The N-linked (GlcNAc...) asparagine glycan is linked to N402. N-linked (GlcNAc...) asparagine glycans are attached at residues N421, N431, and N456. I-EGF domains are found at residues 471 to 495 (CEASRGGAAKCAEEAPLDSTCPQCQ), 499 to 547 (CHQE…KYCE), 548 to 584 (KDDFSCPYHHGSLCAGHGECEAGRCQCFSGWEGDRCQ), and 585 to 625 (CPSA…RFCE). N648 is a glycosylation site (N-linked (GlcNAc...) asparagine). A helical membrane pass occupies residues 684–703 (IFFIIFIVTFLIGLLKILII). At 704 to 768 (RQVILQWNSS…NAHETFRCNF (65 aa)) the chain is on the cytoplasmic side.

Belongs to the integrin beta chain family. As to quaternary structure, heterodimer of an alpha and a beta subunit. Beta-8 (ITGB8) associates with alpha-V (ITGAV) to form ITGAV:ITGB8. ITGAV:ITGB8 interacts with TGFB1. Placenta, kidney, brain, ovary, uterus and in several transformed cells.

The protein resides in the cell membrane. Functionally, integrin alpha-V:beta-8 (ITGAV:ITGB8) is a receptor for fibronectin. It recognizes the sequence R-G-D in its ligands. Integrin alpha-V:beta-6 (ITGAV:ITGB6) mediates R-G-D-dependent release of transforming growth factor beta-1 (TGF-beta-1) from regulatory Latency-associated peptide (LAP), thereby playing a key role in TGF-beta-1 activation on the surface of activated regulatory T-cells (Tregs). Required during vasculogenesis. The protein is Integrin beta-8 (ITGB8) of Oryctolagus cuniculus (Rabbit).